A 235-amino-acid chain; its full sequence is ATP-dependent dethiobiotin synthetase BioD (235 aa).

Position 12-17 (12-17) interacts with ATP; sequence GVGKTF. T16 contributes to the Mg(2+) binding site. K37 is a catalytic residue. S41 contacts substrate. Residues D51, 112-115, and 202-204 contribute to the ATP site; these read EGAG and PKL. 2 residues coordinate Mg(2+): D51 and E112.

The protein belongs to the dethiobiotin synthetase family. As to quaternary structure, homodimer. Mg(2+) is required as a cofactor.

The protein localises to the cytoplasm. The enzyme catalyses (7R,8S)-7,8-diammoniononanoate + CO2 + ATP = (4R,5S)-dethiobiotin + ADP + phosphate + 3 H(+). The protein operates within cofactor biosynthesis; biotin biosynthesis; biotin from 7,8-diaminononanoate: step 1/2. Catalyzes a mechanistically unusual reaction, the ATP-dependent insertion of CO2 between the N7 and N8 nitrogen atoms of 7,8-diaminopelargonic acid (DAPA, also called 7,8-diammoniononanoate) to form a ureido ring. The polypeptide is ATP-dependent dethiobiotin synthetase BioD (Bacillus licheniformis (strain ATCC 14580 / DSM 13 / JCM 2505 / CCUG 7422 / NBRC 12200 / NCIMB 9375 / NCTC 10341 / NRRL NRS-1264 / Gibson 46)).